Consider the following 456-residue polypeptide: Mitochondrial import inner membrane translocase subunit TIM50 (456 aa).

The transit peptide at 1–22 directs the protein to the mitochondrion; it reads MSLSKLSQKCFSRHHARTFIRF. At 23–171 the chain is on the mitochondrial matrix side; that stretch reads SSSDFQSLLG…RRKRMERNTR (149 aa). 2 disordered regions span residues 101–120 and 132–165; these read ETEK…AIDE and EEAA…RRKR. The span at 137–153 shows a compositional bias: polar residues; the sequence is SKTSAPSGSSGDNNDQP. The chain crosses the membrane as a helical span at residues 172–192; that stretch reads IGGYVLLGGSVIGFISFCFYY. The Mitochondrial intermembrane segment spans residues 193-456; it reads GRAQRDEAGN…LFGFRRHASA (264 aa). The FCP1 homology domain maps to 247–391; that stretch reads YLQPKYTIVI…VDLAELLKTI (145 aa).

It belongs to the TIM50 family. In terms of assembly, component of the TIM23 complex at least composed of tim-23, tim-17 and tim-50.

Its subcellular location is the mitochondrion inner membrane. In terms of biological role, essential component of the TIM23 complex, a complex that mediates the translocation of transit peptide-containing proteins across the mitochondrial inner membrane. The sequence is that of Mitochondrial import inner membrane translocase subunit TIM50 (scpl-4) from Caenorhabditis briggsae.